The sequence spans 217 residues: Uridine kinase (217 aa).

17–24 (GASASGKS) provides a ligand contact to ATP.

The protein belongs to the uridine kinase family.

The protein resides in the cytoplasm. The catalysed reaction is uridine + ATP = UMP + ADP + H(+). It catalyses the reaction cytidine + ATP = CMP + ADP + H(+). Its pathway is pyrimidine metabolism; CTP biosynthesis via salvage pathway; CTP from cytidine: step 1/3. It functions in the pathway pyrimidine metabolism; UMP biosynthesis via salvage pathway; UMP from uridine: step 1/1. This Haemophilus ducreyi (strain 35000HP / ATCC 700724) protein is Uridine kinase.